Consider the following 478-residue polypeptide: Protein adenylyltransferase VbhT (478 aa).

In terms of domain architecture, Fido spans 55 to 200 (FDLDHMKKIH…RRNLTEFTVN (146 aa)). ATP contacts are provided by residues 85-88 (KDNS), 133-136 (NALH), 140-147 (EGNGRTLR), and Ser175.

In terms of assembly, homodimer. Interacts with VbhA.

The catalysed reaction is L-tyrosyl-[protein] + ATP = O-(5'-adenylyl)-L-tyrosyl-[protein] + diphosphate. It catalyses the reaction L-threonyl-[protein] + ATP = 3-O-(5'-adenylyl)-L-threonyl-[protein] + diphosphate. Its activity is regulated as follows. Adenylyltransferase activity is inhibited by antitoxin VbhA; which acts by competing with ATP-binding at Arg-147 and prevents productive ATP-binding. In terms of biological role, toxic component of type II toxin-antitoxin (TA) system VbhT-VbhA. Adenylyltransferase involved in virulence by mediating the addition of adenosine 5'-monophosphate (AMP) to specific residue of host GTPases. The resulting AMPylation affects GTPases, impairing actin assembly in infected cells. This chain is Protein adenylyltransferase VbhT (vbhT), found in Bartonella schoenbuchensis (strain DSM 13525 / NCTC 13165 / R1).